A 911-amino-acid chain; its full sequence is Inositol 1,4,5-triphosphate receptor associated 1 (911 aa).

Over residues 1 to 11 the composition is skewed to basic and acidic residues; that stretch reads MVKAPQSEERL. 4 disordered regions span residues 1–21, 39–122, 174–405, and 478–498; these read MVKA…NNSV, EVPG…HRHL, LTRR…GPRL, and EQEK…ESKG. Polar residues predominate over residues 68-86; the sequence is AAQSPAGQDPATTGISCSP. Residues 111-122 show a composition bias toward basic residues; sequence HSPHRRLSHRHL. Ser118 carries the phosphoserine modification. The segment at 152–184 is interaction with PRKG1; it reads SEEDKKKNLALLEEAKLVSERFLTRRGRKSRSS. The segment covering 183-212 has biased composition (polar residues); that stretch reads SSPGESSPAVSPNLSPGASPASSQSNSLTV. A compositionally biased stretch (basic and acidic residues) spans 277 to 292; the sequence is TVEKSKEITIEQKENF. Ser393 is subject to Phosphoserine. The tract at residues 534–580 is interaction with ITPR1; the sequence is NVFVQLSLAFRNDSYTLESRINQAERERNLTEENTEKELENFKASIT. Residues 547 to 645 adopt a coiled-coil conformation; the sequence is SYTLESRINQ…MQYVENLKRT (99 aa). Residues Ser683 and Ser696 each carry the phosphoserine modification. Disordered stretches follow at residues 706–766 and 787–829; these read LNLP…TPSC and YQEG…KEQR. Positions 708-728 are enriched in low complexity; the sequence is LPGQSPSSSPIPSLPALSESS. The span at 790-801 shows a compositional bias: basic and acidic residues; the sequence is GLKKTKELQGLR. The segment covering 802–825 has biased composition (acidic residues); that stretch reads EEEEEQKSESPEEPEEVAETEEEE. Residues 853-873 traverse the membrane as a helical segment; it reads VIWMMAAAMLVLTVVLGLYGS.

Interacts with PRKG1/cGKI-beta and ITPR1/IP3R type I. Part of cGMP kinase signaling complex at least composed of ACTA2/alpha-actin, CNN1/calponin H1, PLN/phospholamban, PRKG1 and ITPR1. Interacts with HCN4; regulates HCN4 channel activity. Phosphorylated by PRKG1/cGKI-beta. Phosphorylation at Ser-696 is necessary for PRKG1-induced calcium release in the cytosol. As to expression, highly expressed in trachea, aorta and uterus.

It is found in the sarcoplasmic reticulum. It localises to the cytoplasm. Its subcellular location is the perinuclear region. The protein resides in the membrane. Functionally, plays a role as NO/PRKG1-dependent regulator of IP3-induced calcium release; its phosphorylation by PRKG1 inhibits bradykinin and IP3-induced calcium release from intracellular stores. Recruits PRKG1 to the endoplasmic reticulum and may mediate the assembly of PRKG1 and ITPR1 in a macrocomplex. Involved in PRKG1 signaling cascade leading to inhibition of platelet activation and aggregation. Also mediates NO-dependent inhibition of calcium signaling in gastrointestinal smooth muscle contributing to NO-dependent relaxation. Plays a role in the regulation of cellular excitability by regulating the hyperpolarization-activated cyclic nucleotide-gated HCN4 channel activity. The chain is Inositol 1,4,5-triphosphate receptor associated 1 (IRAG1) from Bos taurus (Bovine).